Reading from the N-terminus, the 662-residue chain is UvrABC system protein B (662 aa).

The Helicase ATP-binding domain maps to 31-188; that stretch reads DNIEGGEKAQ…NDLVDIQFER (158 aa). An ATP-binding site is contributed by 44–51; it reads GATGTGKT. The Beta-hairpin signature appears at 97-120; it reads YYDYYQPEAYVPSSDTYIEKDSSV. Residues 435–601 enclose the Helicase C-terminal domain; the sequence is QIDDLLGEIN…TIKKEIRDLI (167 aa). Residues 626–661 enclose the UVR domain; it reads KELVKKLEKQMQEAVEVLDFELAAQIRDMMLEVKAL.

Belongs to the UvrB family. In terms of assembly, forms a heterotetramer with UvrA during the search for lesions. Interacts with UvrC in an incision complex.

Its subcellular location is the cytoplasm. Functionally, the UvrABC repair system catalyzes the recognition and processing of DNA lesions. A damage recognition complex composed of 2 UvrA and 2 UvrB subunits scans DNA for abnormalities. Upon binding of the UvrA(2)B(2) complex to a putative damaged site, the DNA wraps around one UvrB monomer. DNA wrap is dependent on ATP binding by UvrB and probably causes local melting of the DNA helix, facilitating insertion of UvrB beta-hairpin between the DNA strands. Then UvrB probes one DNA strand for the presence of a lesion. If a lesion is found the UvrA subunits dissociate and the UvrB-DNA preincision complex is formed. This complex is subsequently bound by UvrC and the second UvrB is released. If no lesion is found, the DNA wraps around the other UvrB subunit that will check the other stand for damage. This chain is UvrABC system protein B, found in Streptococcus pneumoniae (strain P1031).